A 351-amino-acid polypeptide reads, in one-letter code: Holliday junction branch migration complex subunit RuvB (351 aa).

The tract at residues 1–189 is large ATPase domain (RuvB-L); sequence MTAHDADWSD…FGFTAHMDFY (189 aa). ATP is bound by residues leucine 28, arginine 29, glycine 70, lysine 73, threonine 74, serine 75, 136–138, arginine 179, tyrosine 189, and arginine 226; that span reads EDF. Position 74 (threonine 74) interacts with Mg(2+). Positions 190 to 260 are small ATPAse domain (RuvB-S); that stretch reads EPAELQQVLA…VAKAALAVYD (71 aa). A head domain (RuvB-H) region spans residues 263 to 351; the sequence is ELGLDRLDRA…AGLGQPGLFD (89 aa). Positions 318 and 323 each coordinate DNA.

Belongs to the RuvB family. Homohexamer. Forms an RuvA(8)-RuvB(12)-Holliday junction (HJ) complex. HJ DNA is sandwiched between 2 RuvA tetramers; dsDNA enters through RuvA and exits via RuvB. An RuvB hexamer assembles on each DNA strand where it exits the tetramer. Each RuvB hexamer is contacted by two RuvA subunits (via domain III) on 2 adjacent RuvB subunits; this complex drives branch migration. In the full resolvosome a probable DNA-RuvA(4)-RuvB(12)-RuvC(2) complex forms which resolves the HJ.

Its subcellular location is the cytoplasm. The catalysed reaction is ATP + H2O = ADP + phosphate + H(+). Its function is as follows. The RuvA-RuvB-RuvC complex processes Holliday junction (HJ) DNA during genetic recombination and DNA repair, while the RuvA-RuvB complex plays an important role in the rescue of blocked DNA replication forks via replication fork reversal (RFR). RuvA specifically binds to HJ cruciform DNA, conferring on it an open structure. The RuvB hexamer acts as an ATP-dependent pump, pulling dsDNA into and through the RuvAB complex. RuvB forms 2 homohexamers on either side of HJ DNA bound by 1 or 2 RuvA tetramers; 4 subunits per hexamer contact DNA at a time. Coordinated motions by a converter formed by DNA-disengaged RuvB subunits stimulates ATP hydrolysis and nucleotide exchange. Immobilization of the converter enables RuvB to convert the ATP-contained energy into a lever motion, pulling 2 nucleotides of DNA out of the RuvA tetramer per ATP hydrolyzed, thus driving DNA branch migration. The RuvB motors rotate together with the DNA substrate, which together with the progressing nucleotide cycle form the mechanistic basis for DNA recombination by continuous HJ branch migration. Branch migration allows RuvC to scan DNA until it finds its consensus sequence, where it cleaves and resolves cruciform DNA. This chain is Holliday junction branch migration complex subunit RuvB, found in Mycobacterium avium (strain 104).